Reading from the N-terminus, the 343-residue chain is Methylthioribose-1-phosphate isomerase (343 aa).

Substrate is bound by residues 48-50, arginine 88, and glutamine 193; that span reads RGA. Residue aspartate 234 is the Proton donor of the active site. 244–245 contacts substrate; that stretch reads NK.

The protein belongs to the eIF-2B alpha/beta/delta subunits family. MtnA subfamily.

The catalysed reaction is 5-(methylsulfanyl)-alpha-D-ribose 1-phosphate = 5-(methylsulfanyl)-D-ribulose 1-phosphate. It participates in amino-acid biosynthesis; L-methionine biosynthesis via salvage pathway; L-methionine from S-methyl-5-thio-alpha-D-ribose 1-phosphate: step 1/6. Catalyzes the interconversion of methylthioribose-1-phosphate (MTR-1-P) into methylthioribulose-1-phosphate (MTRu-1-P). This is Methylthioribose-1-phosphate isomerase from Thermotoga petrophila (strain ATCC BAA-488 / DSM 13995 / JCM 10881 / RKU-1).